Reading from the N-terminus, the 239-residue chain is Purine nucleoside phosphorylase DeoD-type (239 aa).

His-5 is an a purine D-ribonucleoside binding site. Phosphate is bound by residues Gly-21, Arg-25, Arg-44, and Arg-88 to Ser-91. A purine D-ribonucleoside is bound by residues Glu-180–Glu-182 and Ser-204–Asp-205. Asp-205 functions as the Proton donor in the catalytic mechanism.

The protein belongs to the PNP/UDP phosphorylase family. In terms of assembly, homohexamer; trimer of homodimers.

It catalyses the reaction a purine D-ribonucleoside + phosphate = a purine nucleobase + alpha-D-ribose 1-phosphate. The catalysed reaction is a purine 2'-deoxy-D-ribonucleoside + phosphate = a purine nucleobase + 2-deoxy-alpha-D-ribose 1-phosphate. In terms of biological role, catalyzes the reversible phosphorolytic breakdown of the N-glycosidic bond in the beta-(deoxy)ribonucleoside molecules, with the formation of the corresponding free purine bases and pentose-1-phosphate. In Klebsiella pneumoniae (strain 342), this protein is Purine nucleoside phosphorylase DeoD-type.